A 313-amino-acid chain; its full sequence is Putative S-adenosyl-L-methionine-dependent methyltransferase MAV_5150 (313 aa).

S-adenosyl-L-methionine is bound by residues aspartate 139 and 168–169; that span reads DL.

Belongs to the UPF0677 family.

In terms of biological role, exhibits S-adenosyl-L-methionine-dependent methyltransferase activity. The sequence is that of Putative S-adenosyl-L-methionine-dependent methyltransferase MAV_5150 from Mycobacterium avium (strain 104).